A 68-amino-acid polypeptide reads, in one-letter code: Large ribosomal subunit protein uL29 (68 aa).

It belongs to the universal ribosomal protein uL29 family.

The chain is Large ribosomal subunit protein uL29 from Rhodopseudomonas palustris (strain BisB18).